The sequence spans 73 residues: UPF0352 protein HD_1515 (73 aa).

This sequence belongs to the UPF0352 family.

The sequence is that of UPF0352 protein HD_1515 from Haemophilus ducreyi (strain 35000HP / ATCC 700724).